A 123-amino-acid polypeptide reads, in one-letter code: Holo-[acyl-carrier-protein] synthase (123 aa).

Residues Asp-8 and Glu-56 each coordinate Mg(2+).

This sequence belongs to the P-Pant transferase superfamily. AcpS family. Requires Mg(2+) as cofactor.

It localises to the cytoplasm. The catalysed reaction is apo-[ACP] + CoA = holo-[ACP] + adenosine 3',5'-bisphosphate + H(+). Transfers the 4'-phosphopantetheine moiety from coenzyme A to a Ser of acyl-carrier-protein. The protein is Holo-[acyl-carrier-protein] synthase of Clostridium botulinum (strain Alaska E43 / Type E3).